A 269-amino-acid polypeptide reads, in one-letter code: Phosphonoacetaldehyde hydrolase (269 aa).

The Nucleophile role is filled by aspartate 10. Aspartate 10 and alanine 12 together coordinate Mg(2+). Catalysis depends on lysine 52, which acts as the Schiff-base intermediate with substrate. Aspartate 186 contacts Mg(2+).

The protein belongs to the HAD-like hydrolase superfamily. PhnX family. As to quaternary structure, homodimer. It depends on Mg(2+) as a cofactor.

It catalyses the reaction phosphonoacetaldehyde + H2O = acetaldehyde + phosphate + H(+). Involved in phosphonate degradation. The polypeptide is Phosphonoacetaldehyde hydrolase (Salmonella typhi).